Here is a 138-residue protein sequence, read N- to C-terminus: Small ribosomal subunit protein uS9c (138 aa).

Belongs to the universal ribosomal protein uS9 family.

Its subcellular location is the plastid. It localises to the chloroplast. In Phaeodactylum tricornutum (strain CCAP 1055/1), this protein is Small ribosomal subunit protein uS9c (rps9).